Reading from the N-terminus, the 340-residue chain is Phenylalanine--tRNA ligase alpha subunit (340 aa).

Residue E254 coordinates Mg(2+).

It belongs to the class-II aminoacyl-tRNA synthetase family. Phe-tRNA synthetase alpha subunit type 1 subfamily. In terms of assembly, tetramer of two alpha and two beta subunits. It depends on Mg(2+) as a cofactor.

It localises to the cytoplasm. It carries out the reaction tRNA(Phe) + L-phenylalanine + ATP = L-phenylalanyl-tRNA(Phe) + AMP + diphosphate + H(+). This is Phenylalanine--tRNA ligase alpha subunit from Acidithiobacillus ferrooxidans (strain ATCC 23270 / DSM 14882 / CIP 104768 / NCIMB 8455) (Ferrobacillus ferrooxidans (strain ATCC 23270)).